The sequence spans 484 residues: Tubulin-like protein TubZ (484 aa).

32 to 33 (QK) is a binding site for GTP. Position 64 (aspartate 64) interacts with Mg(2+). Residues 140–142 (GVG), asparagine 213, lysine 237, and asparagine 241 each bind GTP. The required to bind TubR-DNA complex stretch occupies residues 408–484 (RKQDEEKVDI…LKTSNPFKKR (77 aa)). Positions 428-484 (TFNPYNKNQGFGGASRFSGGKNSAFKRQTSEATSTQNQQEEENIISTLKTSNPFKKR) are disordered. The segment covering 452–484 (FKRQTSEATSTQNQQEEENIISTLKTSNPFKKR) has biased composition (polar residues).

It belongs to the FtsZ family. TubZ subfamily. In terms of assembly, forms filaments; a 2-stranded filament forms with the non-hydrolyzable GTP-gamma-S which is probably a precursor to the 4-stranded filament that forms in the presence of GTP. The 4-stranded form binds GDP. In vivo polymerizes to form dynamic filaments that often extend from one cell pole to the other, moving in a unidirectional manner. Filaments polymerize at the plus end and depolymerize at the minus end, a process called treadmilling. Polymerization only occurs above a critical concentration, it does not require upstream tubR. The tubC DNA-TubR complex binds to TubZ. Mg(2+) serves as cofactor.

The protein resides in the cytoplasm. It catalyses the reaction GTP + H2O = GDP + phosphate + H(+). Its activity is regulated as follows. GTPase is inhibited by GTP-gamma-S, which also stabilizes filaments. A tubulin-like, filament forming GTPase; the motor component of the type III plasmid partition system which ensures correct segregation of the pBtoxis plasmid. Filaments may seed from the centromere-like site (tubC) when bound by DNA-binding protein TubR; the tubC-TubR complex stabilizes the TubZ filament. Filaments grow at the plus end and depolymerize at the minus end, a process called treadmilling. TubR-tubC complexes track the depolymerizing minus end of the filament, probably pulling plasmid within the cell. Required for pBtoxis plasmid replication/partition. Binds the TubR-tubC complex; GTP is not required for binding to TubR-tubC. TubZ alone does not bind DNA. Has a high GTPase activity in the presence of Mg(2+); in the presence of GTP assembles into dynamic filaments which upon polymerization bind almost exclusively GDP. Filament formation is cooperative, requiring a critical concentration. Formation occurs very quickly and is followed by disassembly as GTP is consumed. This Bacillus thuringiensis subsp. israelensis protein is Tubulin-like protein TubZ.